The sequence spans 717 residues: DNA ligase (717 aa).

Residues D44–D48, S93–L94, and E127 contribute to the NAD(+) site. K129 serves as the catalytic N6-AMP-lysine intermediate. NAD(+) is bound by residues R150, E186, K302, and K326. Zn(2+) contacts are provided by C431, C434, C455, and C461. Residues A639–G717 enclose the BRCT domain.

The protein belongs to the NAD-dependent DNA ligase family. LigA subfamily. Mg(2+) serves as cofactor. Requires Mn(2+) as cofactor.

The catalysed reaction is NAD(+) + (deoxyribonucleotide)n-3'-hydroxyl + 5'-phospho-(deoxyribonucleotide)m = (deoxyribonucleotide)n+m + AMP + beta-nicotinamide D-nucleotide.. In terms of biological role, DNA ligase that catalyzes the formation of phosphodiester linkages between 5'-phosphoryl and 3'-hydroxyl groups in double-stranded DNA using NAD as a coenzyme and as the energy source for the reaction. It is essential for DNA replication and repair of damaged DNA. The sequence is that of DNA ligase from Sinorhizobium medicae (strain WSM419) (Ensifer medicae).